The following is a 169-amino-acid chain: UPF0251 protein MM_2090 (169 aa).

This sequence belongs to the UPF0251 family.

The chain is UPF0251 protein MM_2090 from Methanosarcina mazei (strain ATCC BAA-159 / DSM 3647 / Goe1 / Go1 / JCM 11833 / OCM 88) (Methanosarcina frisia).